A 54-amino-acid polypeptide reads, in one-letter code: Large ribosomal subunit protein bL32c (54 aa).

Belongs to the bacterial ribosomal protein bL32 family.

The protein localises to the plastid. It localises to the chloroplast. In Lactuca sativa (Garden lettuce), this protein is Large ribosomal subunit protein bL32c.